Reading from the N-terminus, the 398-residue chain is Lysophosphatidylserine lipase ABHD12 (398 aa).

Basic and acidic residues predominate over residues 1–15; sequence MRKRTEPVTLEHERC. The disordered stretch occupies residues 1–24; that stretch reads MRKRTEPVTLEHERCAASGSSSSG. The Cytoplasmic segment spans residues 1–74; it reads MRKRTEPVTL…RKSLWFRLRK (74 aa). Residues 75–95 traverse the membrane as a helical segment; the sequence is ILLCVLGFYIAIPFLVKLCPG. Residues 96–398 are Extracellular-facing; it reads IQAKLIFLNF…LGKSEPERQH (303 aa). Asn123 carries N-linked (GlcNAc...) asparagine glycosylation. The active-site Nucleophile is the Ser246. Residues Asp333 and His372 each act as charge relay system in the active site.

It belongs to the serine esterase family. Glycosylated.

It localises to the endoplasmic reticulum membrane. It is found in the mitochondrion. It catalyses the reaction 1-(9Z-octadecenoyl)-sn-glycero-3-phospho-L-serine + H2O = sn-glycero-3-phospho-L-serine + (9Z)-octadecenoate + H(+). The catalysed reaction is 1-(9Z-octadecenoyl)-sn-glycero-3-phospho-(1'-sn-glycerol) + H2O = sn-glycero-3-phospho-(1'-sn-glycerol) + (9Z)-octadecenoate + H(+). It carries out the reaction 1-(9Z-octadecenoyl)-sn-glycero-3-phospho-(1D-myo-inositol) + H2O = sn-glycero-3-phospho-1D-myo-inositol + (9Z)-octadecenoate + H(+). The enzyme catalyses 1-(9Z-octadecenoyl)-sn-glycero-3-phosphoethanolamine + H2O = sn-glycero-3-phosphoethanolamine + (9Z)-octadecenoate + H(+). It catalyses the reaction 1-(9Z-octadecenoyl)-sn-glycero-3-phosphocholine + H2O = 1-(9Z-octadecenoyl)-sn-glycerol + phosphocholine + H(+). The catalysed reaction is 2-(9Z-octadecenoyl)-glycerol + H2O = glycerol + (9Z)-octadecenoate + H(+). It carries out the reaction 1-hexadecanoyl-sn-glycero-3-phospho-L-serine + H2O = sn-glycero-3-phospho-L-serine + hexadecanoate + H(+). The enzyme catalyses 2-(5Z,8Z,11Z,14Z-eicosatetraenoyl)-glycerol + H2O = glycerol + (5Z,8Z,11Z,14Z)-eicosatetraenoate + H(+). It catalyses the reaction Hydrolyzes glycerol monoesters of long-chain fatty acids.. The catalysed reaction is 1-decanoylglycerol + H2O = decanoate + glycerol + H(+). It carries out the reaction 1-dodecanoylglycerol + H2O = dodecanoate + glycerol + H(+). The enzyme catalyses 1-tetradecanoylglycerol + H2O = tetradecanoate + glycerol + H(+). It catalyses the reaction 2-hexadecanoylglycerol + H2O = glycerol + hexadecanoate + H(+). The catalysed reaction is 1-(9Z-octadecenoyl)-glycerol + H2O = glycerol + (9Z)-octadecenoate + H(+). It carries out the reaction 2-(9Z,12Z-octadecadienoyl)-glycerol + H2O = (9Z,12Z)-octadecadienoate + glycerol + H(+). The enzyme catalyses 1-(5Z,8Z,11Z,14Z-eicosatetraenoyl)-glycerol + H2O = glycerol + (5Z,8Z,11Z,14Z)-eicosatetraenoate + H(+). It catalyses the reaction 1-(9Z,12Z-octadecadienoyl)-glycerol + H2O = (9Z,12Z)-octadecadienoate + glycerol + H(+). The catalysed reaction is 1-hexadecanoylglycerol + H2O = glycerol + hexadecanoate + H(+). It carries out the reaction 1-octadecanoylglycerol + H2O = octadecanoate + glycerol + H(+). The enzyme catalyses 1-octadecanoyl-2-(9,10-epoxyoctadecanoyl)-sn-glycero-3-phospho-L-serine + H2O = 9,10-epoxyoctadecanoate + 1-octadecanoyl-sn-glycero-3-phosphoserine + H(+). It catalyses the reaction 1-octadecanoyl-2-(10-hydroxyoctadecanoyl)-sn-glycero-3-phospho-L-serine + H2O = 1-octadecanoyl-sn-glycero-3-phosphoserine + 10-hydroxyoctadecanoate + H(+). The catalysed reaction is 1-hexadecanoyl-2-(10-hydroxyoctadecanoyl)-sn-glycero-3-phospho-L-serine + H2O = 10-hydroxyoctadecanoate + 1-hexadecanoyl-sn-glycero-3-phospho-L-serine + H(+). Selectively inhibited by DO264 (N-3-pyridyl-N'-(1-[3-chloro-4-{2-chloro-4-(trifluoromethoxy)phenoxy}pyridine-2-yl]piperidin-4-yl)thiourea). Functionally, lysophosphatidylserine (LPS) lipase that mediates the hydrolysis of lysophosphatidylserine, a class of signaling lipids that regulates immunological and neurological processes. Represents a major lysophosphatidylserine lipase in the brain, thereby playing a key role in the central nervous system. Also able to hydrolyze oxidized phosphatidylserine; oxidized phosphatidylserine is produced in response to severe inflammatory stress and constitutes a proapoptotic 'eat me' signal. Also has monoacylglycerol (MAG) lipase activity: hydrolyzes 2-arachidonoylglycerol (2-AG), thereby acting as a regulator of endocannabinoid signaling pathways. Has a strong preference for very-long-chain lipid substrates; substrate specificity is likely due to improved catalysis and not improved substrate binding. The chain is Lysophosphatidylserine lipase ABHD12 from Mus musculus (Mouse).